Consider the following 83-residue polypeptide: Small ribosomal subunit protein bS21 (83 aa).

The disordered stretch occupies residues 40 to 83 (TPMDERRRKARSASKRNKVKWRYSNKSEETASETAETPASAPEA). Over residues 47–62 (RKARSASKRNKVKWRY) the composition is skewed to basic residues. Residues 71-83 (SETAETPASAPEA) show a composition bias toward low complexity.

It belongs to the bacterial ribosomal protein bS21 family.

This chain is Small ribosomal subunit protein bS21, found in Akkermansia muciniphila (strain ATCC BAA-835 / DSM 22959 / JCM 33894 / BCRC 81048 / CCUG 64013 / CIP 107961 / Muc).